The following is a 1048-amino-acid chain: Pleckstrin homology domain-containing family A member 6 (1048 aa).

Residues 1 to 22 (MSNKTGGKRPATTNSDIPNHNM) show a composition bias toward polar residues. The tract at residues 1–36 (MSNKTGGKRPATTNSDIPNHNMVSEVPPERPSVRAT) is disordered. A PH domain is found at 59-158 (PVTKAGWLFK…WIQAMGEAAR (100 aa)). 2 disordered regions span residues 165 to 318 (QKSV…MNQL) and 448 to 467 (SLQPRSHSVPRSPSQGSYSR). Over residues 201-233 (PEPEAKTRGEGDGRGCEKAERRPERPEVKKEPP) the composition is skewed to basic and acidic residues. Residues serine 247 and serine 251 each carry the phosphoserine modification. The span at 267-290 (AQPNGWQYHSPSRPGSTAFPSQDG) shows a compositional bias: polar residues. 4 positions are modified to phosphoserine: serine 314, serine 459, serine 461, and serine 472. Residues 456–465 (VPRSPSQGSY) are compositionally biased toward polar residues. A Phosphotyrosine modification is found at tyrosine 492. The residue at position 591 (serine 591) is a Phosphoserine. A disordered region spans residues 663-746 (RKNNPSRGTD…HQTLPLDTPR (84 aa)). Positions 687–711 (SSNSPASPLSSASLTSPLSPFSLVS) are enriched in low complexity. The span at 712-721 (GSQGSPTKPG) shows a compositional bias: polar residues. At threonine 744 the chain carries Phosphothreonine. The residue at position 777 (serine 777) is a Phosphoserine. Phosphothreonine is present on threonine 784. A disordered region spans residues 793–858 (ASGLTNGLSS…PAPDPSPRPA (66 aa)). Residues 794 to 803 (SGLTNGLSSQ) show a composition bias toward polar residues. The residue at position 801 (serine 801) is a Phosphoserine. Basic and acidic residues predominate over residues 815–827 (GKVKMSVEEQIDR). The segment covering 828–842 (MRRHQSGSMREKRRS) has biased composition (basic residues). Phosphoserine is present on residues serine 848, serine 854, and serine 867. Threonine 920 bears the Phosphothreonine mark. Phosphoserine is present on serine 940. Disordered regions lie at residues 968-989 (PIGEGDSVDVPQDSESQLQEQE) and 1005-1048 (RGRM…TMRV). At threonine 1015 the chain carries Phosphothreonine. The span at 1016–1030 (PSPPTSPASPAPPAN) shows a compositional bias: pro residues. A Phosphoserine modification is found at serine 1017. Threonine 1020 is modified (phosphothreonine). Phosphoserine occurs at positions 1021 and 1024.

As to expression, highly expressed in heart, kidney and throughout the brain.

The polypeptide is Pleckstrin homology domain-containing family A member 6 (PLEKHA6) (Homo sapiens (Human)).